We begin with the raw amino-acid sequence, 223 residues long: Crossover junction endodeoxyribonuclease RuvC (223 aa).

Active-site residues include D12, E73, and D146. The Mg(2+) site is built by D12, E73, and D146. Positions 182–223 (QGKLGKAKSTLNARNNAQVTGDAQVRAGHPSQFERPDRADPR) are disordered. The span at 190 to 202 (STLNARNNAQVTG) shows a compositional bias: polar residues. The segment covering 213–223 (QFERPDRADPR) has biased composition (basic and acidic residues).

This sequence belongs to the RuvC family. As to quaternary structure, homodimer which binds Holliday junction (HJ) DNA. The HJ becomes 2-fold symmetrical on binding to RuvC with unstacked arms; it has a different conformation from HJ DNA in complex with RuvA. In the full resolvosome a probable DNA-RuvA(4)-RuvB(12)-RuvC(2) complex forms which resolves the HJ. Mg(2+) is required as a cofactor.

The protein resides in the cytoplasm. The enzyme catalyses Endonucleolytic cleavage at a junction such as a reciprocal single-stranded crossover between two homologous DNA duplexes (Holliday junction).. Functionally, the RuvA-RuvB-RuvC complex processes Holliday junction (HJ) DNA during genetic recombination and DNA repair. Endonuclease that resolves HJ intermediates. Cleaves cruciform DNA by making single-stranded nicks across the HJ at symmetrical positions within the homologous arms, yielding a 5'-phosphate and a 3'-hydroxyl group; requires a central core of homology in the junction. The consensus cleavage sequence is 5'-(A/T)TT(C/G)-3'. Cleavage occurs on the 3'-side of the TT dinucleotide at the point of strand exchange. HJ branch migration catalyzed by RuvA-RuvB allows RuvC to scan DNA until it finds its consensus sequence, where it cleaves and resolves the cruciform DNA. In Corynebacterium efficiens (strain DSM 44549 / YS-314 / AJ 12310 / JCM 11189 / NBRC 100395), this protein is Crossover junction endodeoxyribonuclease RuvC.